We begin with the raw amino-acid sequence, 448 residues long: Adenylosuccinate synthetase (448 aa).

Residues 22 to 28 and 50 to 52 each bind GTP; these read GDEGKGK and GHT. Aspartate 23 acts as the Proton acceptor in catalysis. Mg(2+)-binding residues include aspartate 23 and glycine 50. Residues 23–26, 48–51, threonine 139, arginine 153, glutamine 234, threonine 249, and arginine 321 each bind IMP; these read DEGK and NAGH. Residue histidine 51 is the Proton donor of the active site. 317-323 lines the substrate pocket; sequence SVTGRPR. GTP is bound by residues arginine 323, 349–351, and 431–433; these read KLD and STG.

This sequence belongs to the adenylosuccinate synthetase family. As to quaternary structure, homodimer. Mg(2+) is required as a cofactor.

It is found in the cytoplasm. The enzyme catalyses IMP + L-aspartate + GTP = N(6)-(1,2-dicarboxyethyl)-AMP + GDP + phosphate + 2 H(+). It functions in the pathway purine metabolism; AMP biosynthesis via de novo pathway; AMP from IMP: step 1/2. Functionally, plays an important role in the de novo pathway of purine nucleotide biosynthesis. Catalyzes the first committed step in the biosynthesis of AMP from IMP. The sequence is that of Adenylosuccinate synthetase from Paraburkholderia xenovorans (strain LB400).